Consider the following 430-residue polypeptide: UPF0597 protein CV_1824 (430 aa).

Belongs to the UPF0597 family.

This is UPF0597 protein CV_1824 from Chromobacterium violaceum (strain ATCC 12472 / DSM 30191 / JCM 1249 / CCUG 213 / NBRC 12614 / NCIMB 9131 / NCTC 9757 / MK).